A 103-amino-acid chain; its full sequence is Large ribosomal subunit protein bL21 (103 aa).

This sequence belongs to the bacterial ribosomal protein bL21 family. In terms of assembly, part of the 50S ribosomal subunit. Contacts protein L20.

Its function is as follows. This protein binds to 23S rRNA in the presence of protein L20. This chain is Large ribosomal subunit protein bL21, found in Burkholderia ambifaria (strain MC40-6).